A 622-amino-acid polypeptide reads, in one-letter code: Iron transport multicopper oxidase fetC (622 aa).

Positions 1–20 are cleaved as a signal peptide; that stretch reads MARLVHLTAVLAASIRLAAA. The Extracellular portion of the chain corresponds to 21 to 552; the sequence is ATINHDFNVT…DPLPAGFTTR (532 aa). N28 and N74 each carry an N-linked (GlcNAc...) asparagine glycan. Plastocyanin-like domains lie at 29–144 and 154–301; these read VTWV…VHDP and EEIV…SYDK. Positions 80 and 82 each coordinate Cu cation. N87 and N112 each carry an N-linked (GlcNAc...) asparagine glycan. 2 residues coordinate Cu cation: H124 and H126. N194, N198, N265, N292, and N358 each carry an N-linked (GlcNAc...) asparagine glycan. The Plastocyanin-like 3 domain occupies 362-497; the sequence is KSPKVPTLYS…GLVATFVEAP (136 aa). Residues H412, H415, and H417 each contribute to the Cu cation site. N428 carries N-linked (GlcNAc...) asparagine glycosylation. H478, C479, H480, and H484 together coordinate Cu cation. The chain crosses the membrane as a helical span at residues 553-573; it reads GIVALVFSCVTGILGICVVAW. Residues 574-622 are Cytoplasmic-facing; the sequence is YGMSQPLEEATAAVATLVREAQVTGSGTSPNHDDGNAAATEAGVLRRRT. The tract at residues 597–622 is disordered; the sequence is TGSGTSPNHDDGNAAATEAGVLRRRT.

Belongs to the multicopper oxidase family.

It is found in the cell membrane. Functionally, cell surface ferroxidase; part of the reductive iron assimilatory system (RIA), a siderophore-independent high affinity iron uptake mechanism. Required to oxidize Fe(2+) and release it from the transporter. The chain is Iron transport multicopper oxidase fetC from Epichloe festucae (strain E2368).